A 259-amino-acid chain; its full sequence is MNTQTAPSPQFYLTAPAACPYLPGQMERKVFTHMVGERAPELNDLLTQGGFRRSQNIAYRPACETCRACISVRILANEFAPTKSMRRVLAANGDIVSAEYPAEPSSEQYNLFRRYLDCRHQKGGMSDMSVLDYAMMVEDTHVHTKIIEYRLRVEGDGINDKARGPLIATALTDRMSDGLSMVYSFFDPALSERSLGTYMILDHIRRAKERGLPHVYLGYWVKGSRKMGYKTKFLPQEHLMARGWERYSVDHDSIKPATD.

The protein belongs to the R-transferase family. Bpt subfamily.

It localises to the cytoplasm. The enzyme catalyses N-terminal L-glutamyl-[protein] + L-leucyl-tRNA(Leu) = N-terminal L-leucyl-L-glutamyl-[protein] + tRNA(Leu) + H(+). It carries out the reaction N-terminal L-aspartyl-[protein] + L-leucyl-tRNA(Leu) = N-terminal L-leucyl-L-aspartyl-[protein] + tRNA(Leu) + H(+). Functionally, functions in the N-end rule pathway of protein degradation where it conjugates Leu from its aminoacyl-tRNA to the N-termini of proteins containing an N-terminal aspartate or glutamate. This Sinorhizobium medicae (strain WSM419) (Ensifer medicae) protein is Aspartate/glutamate leucyltransferase.